The following is a 264-amino-acid chain: Ribosomal RNA small subunit methyltransferase A (264 aa).

S-adenosyl-L-methionine-binding residues include His-15, Leu-17, Gly-42, Glu-63, Asp-88, and Asn-109.

Belongs to the class I-like SAM-binding methyltransferase superfamily. rRNA adenine N(6)-methyltransferase family. RsmA subfamily.

The protein localises to the cytoplasm. The catalysed reaction is adenosine(1518)/adenosine(1519) in 16S rRNA + 4 S-adenosyl-L-methionine = N(6)-dimethyladenosine(1518)/N(6)-dimethyladenosine(1519) in 16S rRNA + 4 S-adenosyl-L-homocysteine + 4 H(+). In terms of biological role, specifically dimethylates two adjacent adenosines (A1518 and A1519) in the loop of a conserved hairpin near the 3'-end of 16S rRNA in the 30S particle. May play a critical role in biogenesis of 30S subunits. The chain is Ribosomal RNA small subunit methyltransferase A from Nitrosococcus oceani (strain ATCC 19707 / BCRC 17464 / JCM 30415 / NCIMB 11848 / C-107).